The sequence spans 98 residues: Cell division protein FtsB (98 aa).

Over methionine 1 to arginine 3 the chain is Cytoplasmic. A helical transmembrane segment spans residues leucine 4–phenylalanine 21. At glycine 22–aspartate 98 the chain is on the periplasmic side. Residues histidine 31 to glutamate 74 adopt a coiled-coil conformation.

The protein belongs to the FtsB family. Part of a complex composed of FtsB, FtsL and FtsQ.

The protein resides in the cell inner membrane. Functionally, essential cell division protein. May link together the upstream cell division proteins, which are predominantly cytoplasmic, with the downstream cell division proteins, which are predominantly periplasmic. This chain is Cell division protein FtsB, found in Shewanella halifaxensis (strain HAW-EB4).